A 458-amino-acid polypeptide reads, in one-letter code: Phosphoglucosamine mutase (458 aa).

The Phosphoserine intermediate role is filled by Ser106. Ser106, Asp247, Asp249, and Asp251 together coordinate Mg(2+). At Ser106 the chain carries Phosphoserine.

It belongs to the phosphohexose mutase family. It depends on Mg(2+) as a cofactor. In terms of processing, activated by phosphorylation.

It catalyses the reaction alpha-D-glucosamine 1-phosphate = D-glucosamine 6-phosphate. Functionally, catalyzes the conversion of glucosamine-6-phosphate to glucosamine-1-phosphate. In Chlamydia trachomatis serovar A (strain ATCC VR-571B / DSM 19440 / HAR-13), this protein is Phosphoglucosamine mutase.